The chain runs to 1364 residues: Trifunctional purine biosynthetic protein adenosine-3 (1364 aa).

In terms of domain architecture, ATP-grasp spans 114–321 (KDFMLRHGIP…LFEVMQACCS (208 aa)). 140-202 (IRSAPYQALV…EELLEGEEIS (63 aa)) contacts ATP. The Mn(2+) site is built by glutamate 291 and asparagine 293. The AIRS stretch occupies residues 435-1154 (AIATAPGLSY…ARTQRMLSQP (720 aa)). The segment at 1155-1364 (RKRVAVLISG…EAPKDIKDSQ (210 aa)) is GART. 1166–1168 (GSN) contributes to the N(1)-(5-phospho-beta-D-ribosyl)glycinamide binding site. (6R)-10-formyltetrahydrofolate contacts are provided by residues arginine 1221, 1246-1249 (MRIL), and asparagine 1263. The Proton donor role is filled by histidine 1265. Residue 1297–1301 (DEGVD) participates in (6R)-10-formyltetrahydrofolate binding. 1327 to 1330 (HYAE) is a binding site for N(1)-(5-phospho-beta-D-ribosyl)glycinamide.

In the N-terminal section; belongs to the GARS family. This sequence in the central section; belongs to the AIR synthase family. It in the C-terminal section; belongs to the GART family.

It carries out the reaction 5-phospho-beta-D-ribosylamine + glycine + ATP = N(1)-(5-phospho-beta-D-ribosyl)glycinamide + ADP + phosphate + H(+). It catalyses the reaction 2-formamido-N(1)-(5-O-phospho-beta-D-ribosyl)acetamidine + ATP = 5-amino-1-(5-phospho-beta-D-ribosyl)imidazole + ADP + phosphate + H(+). The catalysed reaction is N(1)-(5-phospho-beta-D-ribosyl)glycinamide + (6R)-10-formyltetrahydrofolate = N(2)-formyl-N(1)-(5-phospho-beta-D-ribosyl)glycinamide + (6S)-5,6,7,8-tetrahydrofolate + H(+). It participates in purine metabolism; IMP biosynthesis via de novo pathway; 5-amino-1-(5-phospho-D-ribosyl)imidazole from N(2)-formyl-N(1)-(5-phospho-D-ribosyl)glycinamide: step 2/2. The protein operates within purine metabolism; IMP biosynthesis via de novo pathway; N(1)-(5-phospho-D-ribosyl)glycinamide from 5-phospho-alpha-D-ribose 1-diphosphate: step 2/2. Its pathway is purine metabolism; IMP biosynthesis via de novo pathway; N(2)-formyl-N(1)-(5-phospho-D-ribosyl)glycinamide from N(1)-(5-phospho-D-ribosyl)glycinamide (10-formyl THF route): step 1/1. In terms of biological role, trifunctional enzyme required for de novo purine biosynthesis. The polypeptide is Trifunctional purine biosynthetic protein adenosine-3 (ade3) (Drosophila pseudoobscura pseudoobscura (Fruit fly)).